The sequence spans 180 residues: Large ribosomal subunit protein uL5 (180 aa).

This sequence belongs to the universal ribosomal protein uL5 family. In terms of assembly, part of the 50S ribosomal subunit; part of the 5S rRNA/L5/L18/L25 subcomplex. Contacts the 5S rRNA and the P site tRNA. Forms a bridge to the 30S subunit in the 70S ribosome.

Functionally, this is one of the proteins that bind and probably mediate the attachment of the 5S RNA into the large ribosomal subunit, where it forms part of the central protuberance. In the 70S ribosome it contacts protein S13 of the 30S subunit (bridge B1b), connecting the 2 subunits; this bridge is implicated in subunit movement. Contacts the P site tRNA; the 5S rRNA and some of its associated proteins might help stabilize positioning of ribosome-bound tRNAs. In Ligilactobacillus salivarius (strain UCC118) (Lactobacillus salivarius), this protein is Large ribosomal subunit protein uL5.